We begin with the raw amino-acid sequence, 89 residues long: Class I hydrophobin D (89 aa).

An N-terminal signal peptide occupies residues 1–16 (MKFSLATIALAAAVVA). Cystine bridges form between Cys-28–Cys-68, Cys-39–Cys-60, Cys-40–Cys-52, and Cys-69–Cys-85. A glycan (N-linked (GlcNAc...) asparagine) is linked at Asn-36.

It belongs to the fungal hydrophobin family.

Its subcellular location is the secreted. It localises to the cell wall. The protein localises to the vacuole. The protein resides in the cytoplasmic vesicle. Aerial growth, conidiation, and dispersal of filamentous fungi in the environment rely upon a capability of their secreting small amphipathic proteins called hydrophobins (HPBs) with low sequence identity. Class I can self-assemble into an outermost layer of rodlet bundles on aerial cell surfaces, conferring cellular hydrophobicity that supports fungal growth, development and dispersal; whereas Class II form highly ordered films at water-air interfaces through intermolecular interactions but contribute nothing to the rodlet structure. Hyd1D contributes to certain cell wall-related features, such as hydrophobicity but is not involved in cell wall-related events during fungal proliferation in host hemocoel. Does not contribute to conidial hydrophobicity. Involved in insect hemocoel colonization independent of cell hydrophobicity. The sequence is that of Class I hydrophobin D from Beauveria bassiana (strain ARSEF 2860) (White muscardine disease fungus).